Here is a 436-residue protein sequence, read N- to C-terminus: GDP-mannose 6-dehydrogenase (436 aa).

NAD(+) contacts are provided by Tyr-10, Val-11, Asp-30, Lys-35, Thr-86, and Thr-124. GDP-alpha-D-mannuronate is bound by residues Glu-161, Lys-210, Asn-214, His-217, Asn-225, Tyr-256, Tyr-257, Arg-259, and Gly-265. Cys-268 is a catalytic residue. Lys-271 serves as a coordination point for NAD(+). Lys-324 provides a ligand contact to GDP-alpha-D-mannuronate. Position 331 (Arg-331) interacts with NAD(+).

It belongs to the UDP-glucose/GDP-mannose dehydrogenase family.

It carries out the reaction GDP-alpha-D-mannose + 2 NAD(+) + H2O = GDP-alpha-D-mannuronate + 2 NADH + 3 H(+). Its pathway is glycan biosynthesis; alginate biosynthesis. In terms of biological role, catalyzes the oxidation of guanosine diphospho-D-mannose (GDP-D-mannose) to GDP-D-mannuronic acid, a precursor for alginate polymerization. The alginate layer causes a mucoid phenotype and is essential for cyst formation. The protein is GDP-mannose 6-dehydrogenase (algD) of Azotobacter vinelandii.